The primary structure comprises 182 residues: Small ribosomal subunit protein uS5 (182 aa).

Residues 16–79 form the S5 DRBM domain; that stretch reads FVDRLVHINR…ESAKRGMIYV (64 aa).

This sequence belongs to the universal ribosomal protein uS5 family. In terms of assembly, part of the 30S ribosomal subunit. Contacts proteins S4 and S8.

With S4 and S12 plays an important role in translational accuracy. Its function is as follows. Located at the back of the 30S subunit body where it stabilizes the conformation of the head with respect to the body. This is Small ribosomal subunit protein uS5 from Bartonella henselae (strain ATCC 49882 / DSM 28221 / CCUG 30454 / Houston 1) (Rochalimaea henselae).